We begin with the raw amino-acid sequence, 221 residues long: Translation initiation factor 6 (221 aa).

The protein belongs to the eIF-6 family.

Its function is as follows. Binds to the 50S ribosomal subunit and prevents its association with the 30S ribosomal subunit to form the 70S initiation complex. The protein is Translation initiation factor 6 of Halorubrum lacusprofundi (strain ATCC 49239 / DSM 5036 / JCM 8891 / ACAM 34).